The following is a 319-amino-acid chain: Beta-ketoacyl-[acyl-carrier-protein] synthase III (319 aa).

Catalysis depends on residues cysteine 112 and histidine 246. The interval 247-251 (QANFR) is ACP-binding. Residue asparagine 276 is part of the active site.

It belongs to the thiolase-like superfamily. FabH family. In terms of assembly, homodimer.

The protein localises to the cytoplasm. It catalyses the reaction malonyl-[ACP] + acetyl-CoA + H(+) = 3-oxobutanoyl-[ACP] + CO2 + CoA. It participates in lipid metabolism; fatty acid biosynthesis. Functionally, catalyzes the condensation reaction of fatty acid synthesis by the addition to an acyl acceptor of two carbons from malonyl-ACP. Catalyzes the first condensation reaction which initiates fatty acid synthesis and may therefore play a role in governing the total rate of fatty acid production. Possesses both acetoacetyl-ACP synthase and acetyl transacylase activities. Its substrate specificity determines the biosynthesis of branched-chain and/or straight-chain of fatty acids. This chain is Beta-ketoacyl-[acyl-carrier-protein] synthase III, found in Pseudoalteromonas atlantica (strain T6c / ATCC BAA-1087).